Here is a 34-residue protein sequence, read N- to C-terminus: Photosystem II reaction center protein M (34 aa).

A helical membrane pass occupies residues 7-27 (GFIATILFVLVPTVFLLILYI).

This sequence belongs to the PsbM family. In terms of assembly, PSII is composed of 1 copy each of membrane proteins PsbA, PsbB, PsbC, PsbD, PsbE, PsbF, PsbH, PsbI, PsbJ, PsbK, PsbL, PsbM, PsbT, PsbX, PsbY, PsbZ, Psb30/Ycf12, peripheral proteins PsbO, CyanoQ (PsbQ), PsbU, PsbV and a large number of cofactors. It forms dimeric complexes.

The protein resides in the cellular thylakoid membrane. Its function is as follows. One of the components of the core complex of photosystem II (PSII). PSII is a light-driven water:plastoquinone oxidoreductase that uses light energy to abstract electrons from H(2)O, generating O(2) and a proton gradient subsequently used for ATP formation. It consists of a core antenna complex that captures photons, and an electron transfer chain that converts photonic excitation into a charge separation. This subunit is found at the monomer-monomer interface. The sequence is that of Photosystem II reaction center protein M from Picosynechococcus sp. (strain ATCC 27264 / PCC 7002 / PR-6) (Agmenellum quadruplicatum).